A 776-amino-acid polypeptide reads, in one-letter code: FT-interacting protein 4 (776 aa).

Residues 1 to 16 are compositionally biased toward basic and acidic residues; that stretch reads MQRPPPEDFSLKETKP. The disordered stretch occupies residues 1 to 23; sequence MQRPPPEDFSLKETKPHLGGGKV. 3 consecutive C2 domains span residues 22-142, 181-305, and 346-474; these read KVTG…PQWY, VSGT…SRWF, and YSSD…THSY. 5 residues coordinate Ca(2+): Asp55, Asp61, Asp108, Asp110, and Asp115. 3 consecutive transmembrane segments (helical) span residues 577 to 597, 608 to 628, and 719 to 739; these read IMGVLSGIIAVGKWFEQICVW, ILFIILVIYPELILPTIFLYL, and LFVLFCLIAAVILYITPFQVV.

The protein belongs to the MCTP family. As to quaternary structure, interacts with and regulates subcellular localization and trafficking of STM. Ca(2+) serves as cofactor. As to expression, highly expressed in both vegetative and inflorescence shoot apical meristems (SAMs). Accumulates in root meristems. Observed in flowers.

It is found in the endoplasmic reticulum membrane. Its subcellular location is the cytoplasm. It localises to the vesicle. The protein localises to the cell membrane. The protein resides in the endosome membrane. It is found in the golgi apparatus membrane. Required for proliferation and differentiation of shoot stem cells in the shoot apical meristem (SAM), thus determining the appropriate balance between the maintenance of shoot stem cells and their differentiation into other aboveground plant parts via the control of subcellular localization and intercellular trafficking of STM in the shoot apex. Prevents intracellular trafficking of STM to the plasma membrane in cells in the peripheral shoot meristem region thus facilitating STM recycling to the nucleus to maintain stem cells. May function as a signaling molecule by regulating the trafficking of other regulators. The chain is FT-interacting protein 4 from Arabidopsis thaliana (Mouse-ear cress).